The sequence spans 629 residues: DNA-directed RNA polymerase III subunit rpc3 (629 aa).

3 disordered regions span residues 136 to 164 (ANGV…SNEQ), 247 to 294 (PRGA…EMGY), and 373 to 420 (QLDL…SGGN). Residues 257 to 268 (RRADEPNKKCRT) show a composition bias toward basic and acidic residues. Residues 272 to 293 (SVDENDEHDEEEENEWSDDEMG) show a composition bias toward acidic residues. Over residues 374 to 388 (LDLSSSTGPMDSSQP) the composition is skewed to polar residues. Residues 389–409 (DGRRGKRPWDGDVEGTNHEEA) are compositionally biased toward basic and acidic residues. Residues 556-577 (TYKAMSRCLQRLRFERSRIKDF) form a leucine-zipper region.

It belongs to the RNA polymerase beta chain family. Component of the RNA polymerase III (Pol III) complex consisting of 17 subunits.

The protein resides in the nucleus. Functionally, DNA-dependent RNA polymerase catalyzes the transcription of DNA into RNA using the four ribonucleoside triphosphates as substrates. Specific core component of RNA polymerase III which synthesizes small RNAs, such as 5S rRNA and tRNAs. The chain is DNA-directed RNA polymerase III subunit rpc3 (rpc82) from Aspergillus fumigatus (strain ATCC MYA-4609 / CBS 101355 / FGSC A1100 / Af293) (Neosartorya fumigata).